Here is a 290-residue protein sequence, read N- to C-terminus: tRNA dimethylallyltransferase (290 aa).

9-16 (GPTASGKT) is a binding site for ATP. 11 to 16 (TASGKT) contributes to the substrate binding site. The tract at residues 34–37 (DSTQ) is interaction with substrate tRNA.

Belongs to the IPP transferase family. In terms of assembly, monomer. It depends on Mg(2+) as a cofactor.

It catalyses the reaction adenosine(37) in tRNA + dimethylallyl diphosphate = N(6)-dimethylallyladenosine(37) in tRNA + diphosphate. Catalyzes the transfer of a dimethylallyl group onto the adenine at position 37 in tRNAs that read codons beginning with uridine, leading to the formation of N6-(dimethylallyl)adenosine (i(6)A). This Phytoplasma australiense protein is tRNA dimethylallyltransferase.